The sequence spans 490 residues: Gram-negative bacteria-binding protein 3 (490 aa).

A signal peptide spans 1–25 (MADALRFVAWSCCLQLLFLLLGVQG). The region spanning 26–126 (YEVPKAKIDV…GSFVVNGYSG (101 aa)) is the CBM39 domain. In terms of domain architecture, GH16 spans 162-490 (TEVNGAPTRC…KIDYVKVYSL (329 aa)). N362 and N373 each carry an N-linked (GlcNAc...) asparagine glycan.

The protein belongs to the insect beta-1,3-glucan binding protein family.

It is found in the secreted. In terms of biological role, involved in the recognition of invading microorganisms. Binds specifically to beta-1,3-glucan and activates the phenoloxidase cascade. The chain is Gram-negative bacteria-binding protein 3 from Drosophila melanogaster (Fruit fly).